The chain runs to 221 residues: Histone H1C (221 aa).

Disordered regions lie at residues 1 to 43 and 113 to 221; these read MSDP…PPVS and AAKK…AKKA. The H15 domain occupies 38-112; the sequence is THPPVSEMVF…GALGSFKLPA (75 aa). Composition is skewed to basic residues over residues 141-167 and 175-221; these read KVKK…KTTK and AAKK…AKKA.

It belongs to the histone H1/H5 family.

Its subcellular location is the nucleus. The protein localises to the chromosome. Its function is as follows. Histones H1 are necessary for the condensation of nucleosome chains into higher-order structures. The protein is Histone H1C of Chironomus tentans (Midge).